A 500-amino-acid chain; its full sequence is tRNA (guanine(37)-N(1))-methyltransferase (500 aa).

S-adenosyl-L-methionine is bound by residues histidine 215, 253–254 (DL), 281–282 (DA), and asparagine 312. Residues 463–500 (QIVAKKTPKPAPRPLPAKNKTTPDTNKMETDLTKLEMK) are disordered. Residues 488 to 500 (NKMETDLTKLEMK) show a composition bias toward basic and acidic residues.

The protein belongs to the class I-like SAM-binding methyltransferase superfamily. TRM5/TYW2 family. Monomer.

The protein localises to the mitochondrion matrix. It is found in the nucleus. Its subcellular location is the cytoplasm. It carries out the reaction guanosine(37) in tRNA + S-adenosyl-L-methionine = N(1)-methylguanosine(37) in tRNA + S-adenosyl-L-homocysteine + H(+). Functionally, specifically methylates the N1 position of guanosine-37 in various cytoplasmic and mitochondrial tRNAs. Methylation is not dependent on the nature of the nucleoside 5' of the target nucleoside. This is the first step in the biosynthesis of wybutosine (yW), a modified base adjacent to the anticodon of tRNAs and required for accurate decoding. The protein is tRNA (guanine(37)-N(1))-methyltransferase of Anopheles darlingi (Mosquito).